The chain runs to 535 residues: Protoheme IX farnesyltransferase (535 aa).

The unknown stretch occupies residues 1–263; sequence MRRENARVVA…DYVSLTKPGV (263 aa). A run of 14 helical transmembrane segments spans residues 18–38, 40–60, 83–103, 127–147, 163–183, 197–217, 262–282, 285–305, 334–354, 357–377, 385–405, 412–432, 474–494, and 509–529; these read WMVIALALVAYGAILAGSIIP, MTGAAVSSIATAVLGGALAMY, YLTLAFAAVGMLYLAVVAGAL, WPALAHRGLAGVATILIAALA, VACALGLMLVQNIVGLVQVLL, LTHLGLSATAWGALVVLVTLA, GVISLLILTTITSMYITPAGI, WSLVLWTTIGGWLMASGSHSI, HALALGVVLGMIAFAILAIFV, LTALLALAGFFYYVVIYTIWL, IVIGGGAGAFPPLVGWAAVTG, LLLWLIVFFWTPPHFWALALI, LLGMLGWSYLLMASIFGGLFL, and AWALYKYSLLYLALLFVAMVV. Positions 264–535 are protoheme IX prenyltransferase; it reads ISLLILTTIT…AMVVDRAVFA (272 aa).

In the C-terminal section; belongs to the UbiA prenyltransferase family. Protoheme IX farnesyltransferase subfamily.

Its subcellular location is the cell membrane. The catalysed reaction is heme b + (2E,6E)-farnesyl diphosphate + H2O = Fe(II)-heme o + diphosphate. It functions in the pathway porphyrin-containing compound metabolism; heme O biosynthesis; heme O from protoheme: step 1/1. Its function is as follows. Converts heme B (protoheme IX) to heme O by substitution of the vinyl group on carbon 2 of heme B porphyrin ring with a hydroxyethyl farnesyl side group. The sequence is that of Protoheme IX farnesyltransferase (ctaB) from Roseiflexus castenholzii (strain DSM 13941 / HLO8).